A 593-amino-acid chain; its full sequence is A-type ATP synthase subunit A (593 aa).

An ATP-binding site is contributed by 236–243; it reads GPFGSGKT.

The protein belongs to the ATPase alpha/beta chains family. As to quaternary structure, has multiple subunits with at least A(3), B(3), C, D, E, F, H, I and proteolipid K(x).

It is found in the cell membrane. It carries out the reaction ATP + H2O + 4 H(+)(in) = ADP + phosphate + 5 H(+)(out). Its function is as follows. Component of the A-type ATP synthase that produces ATP from ADP in the presence of a proton gradient across the membrane. The A chain is the catalytic subunit. The sequence is that of A-type ATP synthase subunit A from Pyrobaculum arsenaticum (strain DSM 13514 / JCM 11321 / PZ6).